A 150-amino-acid chain; its full sequence is UPF0756 membrane protein plu2726 (150 aa).

4 consecutive transmembrane segments (helical) span residues 8 to 28 (LLVLLVLAALGIISHNMTVTL), 51 to 71 (YGLTIGVLILTVGVMAPIASG), 88 to 108 (LLAIVIGVLVSWLGSRGVSLM), and 123 to 143 (VLGVALFKGVPVGPLIAAGIL).

It belongs to the UPF0756 family.

The protein localises to the cell membrane. This chain is UPF0756 membrane protein plu2726, found in Photorhabdus laumondii subsp. laumondii (strain DSM 15139 / CIP 105565 / TT01) (Photorhabdus luminescens subsp. laumondii).